We begin with the raw amino-acid sequence, 304 residues long: Mas-related G-protein coupled receptor member A1 (304 aa).

The Extracellular segment spans residues 1-17 (MDNTIPGGINITILIPN). Residue asparagine 10 is glycosylated (N-linked (GlcNAc...) asparagine). A helical transmembrane segment spans residues 18-38 (LMIIIFGLVGLTGNGIVFWLL). The Cytoplasmic segment spans residues 39–53 (GFCLHRNAFSVYILN). Residues 54 to 74 (LALADFFFLLGHIIDSILLLL) form a helical membrane-spanning segment. Asparagine 75 is a topological domain (extracellular). A helical transmembrane segment spans residues 76-96 (VFYPITFLLCFYTIMMVLYIA). At 97 to 131 (GLSMLSAISTERCLSVLCPIWYHCHRPEHTSTVMC) the chain is on the cytoplasmic side. Residues 132 to 152 (AVIWVLSLLICILNSYFCGFL) form a helical membrane-spanning segment. The Extracellular portion of the chain corresponds to 153-166 (NTQYKNENGCLALN). The chain crosses the membrane as a helical span at residues 167–187 (FFTAAYLMFLFVVLCLSSLAL). Residues 188–206 (VARLFCGTGQIKLTRLYVT) are Cytoplasmic-facing. The helical transmembrane segment at 207–227 (IILSILVFLLCGLPFGIHWFL) threads the bilayer. The Extracellular segment spans residues 228–243 (LFKIKDDFHVFDLGFY). The chain crosses the membrane as a helical span at residues 244 to 264 (LASVVLTAINSCANPIIYFFV). Residues 265–304 (GSFRHRLKHQTLKMVLQNALQDTPETAKIMVEMSRSKSEP) lie on the Cytoplasmic side of the membrane.

It belongs to the G-protein coupled receptor 1 family. Mas subfamily. As to expression, expressed in a subset of sensory neurons that includes nociceptors. Expressed in the subclass of non-peptidergic sensory neurons that are IB4(+) and VR1(-).

It localises to the cell membrane. Functionally, orphan receptor activated by a subset of RFamide-family neuropeptides such as FLRF-amide and FMRF-amide. Mediates its action by association with G proteins that activate a phosphatidylinositol-calcium second messenger system. Its effect is mediated by G(q) and G(11) proteins. May regulate the function of nociceptive neurons by modulation of pain perception. The polypeptide is Mas-related G-protein coupled receptor member A1 (Mrgpra1) (Mus musculus (Mouse)).